The sequence spans 202 residues: GTP cyclohydrolase 1 (202 aa).

Zn(2+) contacts are provided by C90, H93, and C163.

This sequence belongs to the GTP cyclohydrolase I family. In terms of assembly, toroid-shaped homodecamer, composed of two pentamers of five dimers.

It catalyses the reaction GTP + H2O = 7,8-dihydroneopterin 3'-triphosphate + formate + H(+). It participates in cofactor biosynthesis; 7,8-dihydroneopterin triphosphate biosynthesis; 7,8-dihydroneopterin triphosphate from GTP: step 1/1. The protein is GTP cyclohydrolase 1 of Mycolicibacterium vanbaalenii (strain DSM 7251 / JCM 13017 / BCRC 16820 / KCTC 9966 / NRRL B-24157 / PYR-1) (Mycobacterium vanbaalenii).